The sequence spans 312 residues: MKNHAISNKYLDISPEVTEALENNRPVVALESTIIAHGMPYPQNVKTALQVEQKIRENGAVPATIAVINGMMKAGLSHEEIAFLARKGDEITKVSRRDLPFVIAAGKNGATTVASTMIIAAMAGIRIFATGGIGGVHRGAEQTFDISADLQELAKTSVAVVCAGAKSILDLGLTTEYLETHGVPLIGYQTHALPAFFCRTSPFSVNIRLDSPEQIAQAMAVKWDTGLQGGLVVANPIPEPYAMPEAEISAAIEQAVRESIEQRVNGKACTPFLLARVSELTGGNSLSSNIQLVLNNAELAAKIACCYWERHM.

E31 functions as the Proton donor in the catalytic mechanism. The substrate site is built by K93 and V113. Mn(2+) is bound at residue D145. A substrate-binding site is contributed by 147–149 (SAD). K166 serves as the catalytic Nucleophile.

This sequence belongs to the pseudouridine-5'-phosphate glycosidase family. In terms of assembly, homotrimer. The cofactor is Mn(2+).

The enzyme catalyses D-ribose 5-phosphate + uracil = psi-UMP + H2O. Its function is as follows. Catalyzes the reversible cleavage of pseudouridine 5'-phosphate (PsiMP) to ribose 5-phosphate and uracil. Functions biologically in the cleavage direction, as part of a pseudouridine degradation pathway. The chain is Pseudouridine-5'-phosphate glycosidase 2 from Photorhabdus laumondii subsp. laumondii (strain DSM 15139 / CIP 105565 / TT01) (Photorhabdus luminescens subsp. laumondii).